The following is a 118-amino-acid chain: Sporulation protein YjcA (118 aa).

Transmembrane regions (helical) follow at residues 8–28, 62–82, and 92–112; these read IVLL…DTIM, FIGE…GFLI, and AQWL…ETLV.

It belongs to the UPF0713 family.

The protein resides in the cell membrane. Involved in sporulation. In Bacillus subtilis (strain 168), this protein is Sporulation protein YjcA (yjcA).